A 232-amino-acid chain; its full sequence is Megakaryocyte and platelet inhibitory receptor G6b (232 aa).

The N-terminal stretch at 1-17 is a signal peptide; it reads MALVLQLLPLLLSKVQG. The Extracellular portion of the chain corresponds to 18–140; sequence NPEVSLEGNP…GSTHGSEYSK (123 aa). 2 N-linked (GlcNAc...) asparagine glycosylation sites follow: asparagine 32 and asparagine 112. The chain crosses the membrane as a helical span at residues 141–161; the sequence is VLIPLLGFGLVLGLGALGLVW. Topologically, residues 162 to 232 are cytoplasmic; that stretch reads WRRSCVPPSH…DASTVYAVVV (71 aa). 2 consecutive short sequence motifs (ITIM motif) follow at residues 200-205 and 226-231; these read LHYADL and TVYAVV. Tyrosine 202 is subject to Phosphotyrosine.

As to quaternary structure, interacts (via ITIM motif) with PTPN6 and PTPN11. Binds to heparin. Post-translationally, N-glycosylated. In terms of processing, may be O-glycosylated. Phosphorylated.

The protein localises to the cell membrane. Functionally, inhibitory receptor that acts as a critical regulator of hematopoietic lineage differentiation, megakaryocyte function and platelet production. Inhibits platelet aggregation and activation by agonists such as ADP and collagen-related peptide. This regulation of megakaryocate function as well as platelet production ann activation is done through the inhibition (via the 2 ITIM motifs) of the receptors CLEC1B and GP6:FcRgamma signaling. Appears to operate in a calcium-independent manner. This chain is Megakaryocyte and platelet inhibitory receptor G6b, found in Rattus norvegicus (Rat).